The chain runs to 127 residues: Small ribosomal subunit protein bS6 (127 aa).

This sequence belongs to the bacterial ribosomal protein bS6 family.

In terms of biological role, binds together with bS18 to 16S ribosomal RNA. The chain is Small ribosomal subunit protein bS6 from Sulfurovum sp. (strain NBC37-1).